The following is a 1157-amino-acid chain: MHASSAAATALVEYSDVSSEDFSDQEAGDLDADAGKGAGNIKKPKPAPDNQFSKGRLDAKPDKEGYDNYRSRRAEDSSDPVAAGSRQTSSSEATNPREEPSQASNTSKDELWGREIYMSSDSIDTDELEAEMKRQKRKKQKKEKHKHKSKKKSKKRKKKRAKSYSSIDSMSDNDINALLDRRYTPPTAPSKSNERTVSAAPSSFTPHNLKESSSPATPPPVRRPNTNSNYYGESSLETANSALGSNLQVTVTNKQSISNRLRSPPPSSRSSGNGPRFGNSPRTPPPSHYSSSGGGGVGSGSVVRDSRSSRYVNSPHKEDVSAHHRSSHDHGYQGRYSGAGSSSHDTRKVKRLSPELDRYNHQPSTPPHKRRKFSDGREVGLGNFEHSRHHSGKYERYSRDRYSRRSSRSPSVQHSRSRQSPSGGLSSGSNAFRHGGSHKHKYGTTVSSTPSHTTRTSKRASGTGTSGDRYSRSPRTSSRYMESSPPSPVGASGSHHYHHRRSPRMRQRTRGDSRRRSPSSASSESSASRSRSPTSRDLKHKREEYIKKISETSLFAELVKDRHKRQKALKEIIERQEENSNSNSNGALTINDNSSSVDGNTPNAADGRSAPGSGTPAAASTTSNGLQALGSKPDLDLNNIPMPNKQNDSVVSNPASNADVPDSVAQLKQPLLVPPFSASKNNIKPKSLTSLPLPPGMNVLDLAGARSPSPGQKKESDEKNVTSSGSANKSVLNLPMPPVIPGSEELSGDDDVIDSPEDFDAPAVGTVHGHGGGPGTTRQRPVILNRRDSRNNVRDWGERCVDVFEMIAQIGEGTYGQVYKARDHHTNDMVALKKVRLEHEKEGFPITAVREIKILRQLNHRNIVNLHEIVTDKQDAVEFRKDKGSFYLVFEYMDHDLMGLLESGMVDFNEENNASIMKQLLDGLNYCHKKNFLHRDIKCSNILMNNRGKVKLADFGLARLYNADDRERPYTNKVITLWYRPPELLLGEERYGPSIDVWSCGCILGELFVKRPLFQANAEMAQLETISKICGSPVPAVWPNVIKLPLFHTLKQKKTHRRRLREDFEFMPAPALDLLDKMLDLDPDKRITAEDALRSPWLRKINPDEMPTPQLPTWQDCHELWSKKRRRQMREQQESLPPTVIASTKYQQHGATMVGDA.

The tract at residues 15–540 is disordered; it reads SDVSSEDFSD…RSPTSRDLKH (526 aa). Over residues 18-32 the composition is skewed to acidic residues; it reads SSEDFSDQEAGDLDA. The span at 55 to 76 shows a compositional bias: basic and acidic residues; sequence GRLDAKPDKEGYDNYRSRRAED. The segment covering 85–94 has biased composition (polar residues); sequence SRQTSSSEAT. T106 carries the post-translational modification Phosphothreonine. Residues 134 to 162 show a composition bias toward basic residues; sequence RQKRKKQKKEKHKHKSKKKSKKRKKKRAK. Residues 163 to 176 show a composition bias toward low complexity; the sequence is SYSSIDSMSDNDIN. T184 is subject to Phosphothreonine. A compositionally biased stretch (polar residues) spans 189 to 215; the sequence is PSKSNERTVSAAPSSFTPHNLKESSSP. Residues S190 and S192 each carry the phosphoserine modification. The residue at position 217 (T217) is a Phosphothreonine. Residues 224-255 are compositionally biased toward polar residues; sequence PNTNSNYYGESSLETANSALGSNLQVTVTNKQ. Residues 256–281 are compositionally biased toward low complexity; the sequence is SISNRLRSPPPSSRSSGNGPRFGNSP. Phosphoserine is present on S280. Phosphothreonine is present on T283. 3 positions are modified to phosphoserine: S291, S301, and S314. The segment covering 315 to 332 has biased composition (basic and acidic residues); it reads PHKEDVSAHHRSSHDHGY. Residue S353 is modified to Phosphoserine. The residue at position 365 (T365) is a Phosphothreonine. Residues 392 to 403 show a composition bias toward basic and acidic residues; sequence GKYERYSRDRYS. Low complexity predominate over residues 408–422; that stretch reads RSPSVQHSRSRQSPS. Residues 444-468 are compositionally biased toward polar residues; it reads TTVSSTPSHTTRTSKRASGTGTSGD. Positions 473–484 are enriched in low complexity; it reads SPRTSSRYMESS. Phosphoserine is present on residues S487 and S492. Basic residues predominate over residues 495 to 508; it reads HHYHHRRSPRMRQR. Over residues 518–533 the composition is skewed to low complexity; sequence PSSASSESSASRSRSP. S553 bears the Phosphoserine mark. 2 disordered regions span residues 574–661 and 675–782; these read ERQE…ADVP and PFSA…QRPV. The segment covering 586 to 603 has biased composition (polar residues); the sequence is GALTINDNSSSVDGNTPN. The segment covering 609–623 has biased composition (low complexity); that stretch reads SAPGSGTPAAASTTS. 2 stretches are compositionally biased toward polar residues: residues 644–656 and 721–731; these read NKQN…NPAS and VTSSGSANKSV. A phosphoserine mark is found at S730, S743, S747, and S755. Residues 746–760 show a composition bias toward acidic residues; sequence LSGDDDVIDSPEDFD. In terms of domain architecture, Protein kinase spans 804 to 1098; it reads FEMIAQIGEG…AEDALRSPWL (295 aa). ATP-binding positions include 810–818, K833, and 891–896; these read IGEGTYGQV and EYMDHD. Residue D936 is the Proton acceptor of the active site. H1118 lines the ATP pocket.

The protein belongs to the protein kinase superfamily. CMGC Ser/Thr protein kinase family. CDC2/CDKX subfamily. Interacts with cyclin CycK.

Its subcellular location is the nucleus. It localises to the chromosome. The catalysed reaction is [DNA-directed RNA polymerase] + ATP = phospho-[DNA-directed RNA polymerase] + ADP + H(+). It catalyses the reaction L-seryl-[protein] + ATP = O-phospho-L-seryl-[protein] + ADP + H(+). The enzyme catalyses L-threonyl-[protein] + ATP = O-phospho-L-threonyl-[protein] + ADP + H(+). Cyclin-dependent kinase which displays CTD kinase activity: hyperphosphorylates the C-terminal heptapeptide repeat domain (CTD) of the largest RNA polymerase II subunit, thereby acting as a key regulator of transcription elongation. In Drosophila melanogaster (Fruit fly), this protein is Cyclin-dependent kinase 12 (Cdk12).